A 507-amino-acid polypeptide reads, in one-letter code: Maturase K (507 aa).

Belongs to the intron maturase 2 family. MatK subfamily.

It is found in the plastid. The protein localises to the chloroplast. In terms of biological role, usually encoded in the trnK tRNA gene intron. Probably assists in splicing its own and other chloroplast group II introns. This Fagopyrum esculentum (Common buckwheat) protein is Maturase K.